We begin with the raw amino-acid sequence, 122 residues long: MAVTARNQRVAEEMKKEIARIIRDEVKDPRLEAGLVSVTGVELSNDRHYAKVYVSIYGDEEARNQAMEGLARATSFIRREIGQRLSLRYTPEITFKLDVSIEHGDHINRLLARVRAGEYADE.

It belongs to the RbfA family. As to quaternary structure, monomer. Binds 30S ribosomal subunits, but not 50S ribosomal subunits or 70S ribosomes.

The protein localises to the cytoplasm. Functionally, one of several proteins that assist in the late maturation steps of the functional core of the 30S ribosomal subunit. Associates with free 30S ribosomal subunits (but not with 30S subunits that are part of 70S ribosomes or polysomes). Required for efficient processing of 16S rRNA. May interact with the 5'-terminal helix region of 16S rRNA. This chain is Ribosome-binding factor A, found in Moorella thermoacetica (strain ATCC 39073 / JCM 9320).